Here is a 103-residue protein sequence, read N- to C-terminus: Large ribosomal subunit protein P1 (103 aa).

Positions 66–103 are disordered; it reads PAAGAPAAGAAGGAVEEKKEEKKAESEDESDDDMGLFD. The segment covering 80 to 90 has biased composition (basic and acidic residues); that stretch reads VEEKKEEKKAE. Positions 91-103 are enriched in acidic residues; it reads SEDESDDDMGLFD.

The protein belongs to the eukaryotic ribosomal protein P1/P2 family. As to quaternary structure, P1 and P2 exist as dimers at the large ribosomal subunit.

In terms of biological role, plays an important role in the elongation step of protein synthesis. In Polyorchis penicillatus (Hydromedusa), this protein is Large ribosomal subunit protein P1.